The sequence spans 369 residues: Signal recognition particle receptor FtsY (369 aa).

A compositionally biased stretch (basic and acidic residues) spans 20–42; that stretch reads GEENKKEPETRQTDQLESKKEET. Positions 20-58 are disordered; sequence GEENKKEPETRQTDQLESKKEETIQQQQNVQQPQAENKI. Residues 44–53 are compositionally biased toward low complexity; it reads QQQQNVQQPQ. GTP contacts are provided by residues 180 to 187, 262 to 266, and 320 to 323; these read GVNGVGKT, DTAGR, and TKVD.

This sequence belongs to the GTP-binding SRP family. FtsY subfamily. Part of the signal recognition particle protein translocation system, which is composed of SRP and FtsY.

It localises to the cell membrane. The protein localises to the cytoplasm. The catalysed reaction is GTP + H2O = GDP + phosphate + H(+). In terms of biological role, involved in targeting and insertion of nascent membrane proteins into the cytoplasmic membrane. Acts as a receptor for the complex formed by the signal recognition particle (SRP) and the ribosome-nascent chain (RNC). This is Signal recognition particle receptor FtsY from Sulfolobus acidocaldarius (strain ATCC 33909 / DSM 639 / JCM 8929 / NBRC 15157 / NCIMB 11770).